A 598-amino-acid polypeptide reads, in one-letter code: tRNA(Met) cytidine acetyltransferase TmcA (598 aa).

Residues Q141, 163–172 (GRGKSTLAGK), and R288 each bind ATP. Residues 332 to 490 (TDLRRLFDAD…HSAMMLYPLS (159 aa)) enclose the N-acetyltransferase domain. Acetyl-CoA contacts are provided by residues 411-413 (IAV), 418-424 (QNQGIGS), and R462.

The protein belongs to the RNA cytidine acetyltransferase family. TmcA subfamily.

The protein resides in the cytoplasm. The enzyme catalyses cytidine(34) in elongator tRNA(Met) + acetyl-CoA + ATP + H2O = N(4)-acetylcytidine(34) in elongator tRNA(Met) + ADP + phosphate + CoA + H(+). Its function is as follows. Catalyzes the formation of N(4)-acetylcytidine (ac(4)C) at the wobble position of tRNA(Met), by using acetyl-CoA as an acetyl donor and ATP (or GTP). The protein is tRNA(Met) cytidine acetyltransferase TmcA of Haemophilus ducreyi (strain 35000HP / ATCC 700724).